Consider the following 480-residue polypeptide: Cytochrome P450 monooxygenase ORF11 (480 aa).

A helical transmembrane segment spans residues 9–29 (LLLLPHLSALTPKTGFLIGLA). Residues Asn265 and Asn352 are each glycosylated (N-linked (GlcNAc...) asparagine). Cys449 contacts heme.

This sequence belongs to the cytochrome P450 family. Heme is required as a cofactor.

It is found in the membrane. It functions in the pathway sesquiterpene biosynthesis. Its function is as follows. Cytochrome P450 monooxygenase; part of the gene cluster that mediates the biosynthesis of PR-toxin, a bicyclic sesquiterpene belonging to the eremophilane class and acting as a mycotoxin. The first step of the pathway is catalyzed by the aristolochene synthase which performs the cyclization of trans,trans-farnesyl diphosphate (FPP) to the bicyclic sesquiterpene aristolochene. Following the formation of aristolochene, the non-oxygenated aristolochene is converted to the trioxygenated intermediate eremofortin B, via 7-epi-neopetasone. This conversion appears to involve three enzymes, a hydroxysterol oxidase-like enzyme, the quinone-oxidase prx3 that forms the quinone-type-structure in the bicyclic nucleus of aristolochene with the C8-oxo group and the C-3 hydroxyl group, and the P450 monooxygenase ORF6 that introduces the epoxide at the double bond between carbons 1 and 2. No monoxy or dioxy-intermediates have been reported to be released to the broth, so these three early oxidative reactions may be coupled together. Eremofortin B is further oxidized by another P450 monooxygenase, that introduces a second epoxide between carbons 7 and 11 prior to acetylation to eremofortin A by the acetyltransferase ORF8. The second epoxidation may be performed by a second P450 monooxygenase. After the acetylation step, eremofortin A is converted to eremofortin C and then to PR-toxin. First the conversion of eremofortin A to eremofortin C proceeds by oxidation of the side chain of the molecule at C-12 and is catalyzed by the short-chain oxidoreductase prx1. The cytochrome P450 monooxygenase ORF6 is probably also involved in this step. The primary alcohol formed at C-12 is finally oxidized by the short-chain alcohol dehydrogenase prx4 that forms PR-toxin. The polypeptide is Cytochrome P450 monooxygenase ORF11 (Penicillium roqueforti (strain FM164)).